We begin with the raw amino-acid sequence, 1044 residues long: Translation initiation factor IF-2 (1044 aa).

The disordered stretch occupies residues 55–458 (EAQEGQGAGK…KRKASAQERR (404 aa)). Low complexity predominate over residues 57–77 (QEGQGAGKSAAKSAKPAAQPK). Positions 104 to 146 (LSEKRERRPLTERRPLAERRPLAERPLVDRPVTERPLAERPAA) are enriched in basic and acidic residues. 3 stretches are compositionally biased toward low complexity: residues 147–168 (ELRPGAAKAAAPARPAAEAQPV), 190–231 (KAQP…QKPA), and 254–265 (ASSRPASAAPAA). The span at 267 to 281 (GEKRPAAAAERREEP) shows a compositional bias: basic and acidic residues. Composition is skewed to low complexity over residues 352–375 (AAGQGTAARAGGLGLPQKPKAGAP) and 383–395 (APQRPGRRGAPLA). Residues 399 to 444 (LDPKVAEQAKAGEGKPRYGQSGDKRRADLYDRREHPSSQPSEEKLF) are compositionally biased toward basic and acidic residues. The region spanning 546–714 (PRHPVVTIMG…ILVLAEVSDL (169 aa)) is the tr-type G domain. A G1 region spans residues 555–562 (GHVDHGKT). 555 to 562 (GHVDHGKT) lines the GTP pocket. The segment at 580–584 (GITQH) is G2. A G3 region spans residues 601–604 (DTPG). GTP contacts are provided by residues 601–605 (DTPGH) and 655–658 (NKID). Positions 655 to 658 (NKID) are G4. A G5 region spans residues 691–693 (SAK).

This sequence belongs to the TRAFAC class translation factor GTPase superfamily. Classic translation factor GTPase family. IF-2 subfamily.

It localises to the cytoplasm. Its function is as follows. One of the essential components for the initiation of protein synthesis. Protects formylmethionyl-tRNA from spontaneous hydrolysis and promotes its binding to the 30S ribosomal subunits. Also involved in the hydrolysis of GTP during the formation of the 70S ribosomal complex. This chain is Translation initiation factor IF-2, found in Symbiobacterium thermophilum (strain DSM 24528 / JCM 14929 / IAM 14863 / T).